Reading from the N-terminus, the 272-residue chain is Proteasome subunit beta type-5 (272 aa).

Residues 1 to 55 (MKLDTSGLESTAPIFRRSDFVFDGLQMTPSFDLPNPTDFDGFQKEAVQMVKPAKG) constitute a propeptide, removed in mature form. Threonine 56 serves as the catalytic Nucleophile.

Belongs to the peptidase T1B family. In terms of assembly, the 26S proteasome consists of a 20S proteasome core and two 19S regulatory subunits. The 20S proteasome core is composed of 28 subunits that are arranged in four stacked rings, resulting in a barrel-shaped structure. The two end rings are each formed by seven alpha subunits, and the two central rings are each formed by seven beta subunits. The catalytic chamber with the active sites is on the inside of the barrel.

The protein localises to the cytoplasm. The protein resides in the nucleus. It carries out the reaction Cleavage of peptide bonds with very broad specificity.. In terms of biological role, the proteasome is a multicatalytic proteinase complex which is characterized by its ability to cleave peptides with Arg, Phe, Tyr, Leu, and Glu adjacent to the leaving group at neutral or slightly basic pH. The proteasome has an ATP-dependent proteolytic activity. This is Proteasome subunit beta type-5 from Spinacia oleracea (Spinach).